Consider the following 234-residue polypeptide: MIFTNAILVISALLPATVLSLQHTEDSLFPARCWPDPCAGITFQNDTYVCGDPRLGPVVLPQKFPLNNELRTYARFGALCPAEFLDKWATDVAPNGTYIYPPANGFALDTEEQPILGNATLPVGMKLDRFGSEYGTFLAPLGAPYIERSLPPSNLNTFDGMYPYNYHVYQVTKEFVVGLGPIAPWFEQPGMGTQFVTYTNVLGLIDDGYLRRLDESEYDEKVEYSNPYTPGPNQ.

The first 20 residues, 1 to 20 (MIFTNAILVISALLPATVLS), serve as a signal peptide directing secretion. Residues 21–117 (LQHTEDSLFP…LDTEEQPILG (97 aa)) are thump. 2 disulfides stabilise this stretch: cysteine 33-cysteine 80 and cysteine 38-cysteine 50. 3 N-linked (GlcNAc...) asparagine glycosylation sites follow: asparagine 45, asparagine 95, and asparagine 118. The TNT domain maps to 120–212 (TLPVGMKLDR…GLIDDGYLRR (93 aa)). Arginine 129 is an active-site residue. Positions 130, 136, and 148 each coordinate NAD(+). Glutamine 194 is an active-site residue. The Ca(2+) site is built by serine 216, aspartate 219, glutamate 220, and glutamate 223.

Belongs to the fungal surface NADase family. In terms of assembly, homodimer. In terms of processing, N-glycosylated.

The protein resides in the secreted. It catalyses the reaction NAD(+) + H2O = ADP-D-ribose + nicotinamide + H(+). The catalysed reaction is NADP(+) + H2O = ADP-D-ribose 2'-phosphate + nicotinamide + H(+). Its activity is regulated as follows. The catalytic activity is positively regulated by calcium via its binding to the calcium-binding site. Conidial surface nicotinamide adenine dinucleotide glycohydrolase that cleave NAD(+) and NADP(+) but not their reduced counterparts, NADH and NADPH. Lacks both ADP-ribosyl cyclase and base exchange activity and does not mediate synthesis of calcium messengers cADPR or NAADP. Plays a role in pathogenicity by depleting the host's NAD(+) pool. The chain is Conidial surface nicotinamide adenine dinucleotide glycohydrolase nadA from Aspergillus fumigatus (strain ATCC MYA-4609 / CBS 101355 / FGSC A1100 / Af293) (Neosartorya fumigata).